A 497-amino-acid polypeptide reads, in one-letter code: Beta-glucosidase 8 (497 aa).

Positions 1–22 are cleaved as a signal peptide; sequence MKHFNLLSIILVIVLATSYIDA. Gln-42 lines the a beta-D-glucoside pocket. The N-linked (GlcNAc...) asparagine glycan is linked to Asn-65. A beta-D-glucoside-binding positions include His-139 and 184-185; that span reads NE. Glu-185 acts as the Proton donor in catalysis. Asn-202 carries an N-linked (GlcNAc...) asparagine glycan. Tyr-319 is a binding site for a beta-D-glucoside. Asn-354 carries an N-linked (GlcNAc...) asparagine glycan. 3 residues coordinate a beta-D-glucoside: Glu-387, Trp-430, and Phe-446. Glu-387 serves as the catalytic Nucleophile. Residues Asn-452, Asn-474, and Asn-490 are each glycosylated (N-linked (GlcNAc...) asparagine).

This sequence belongs to the glycosyl hydrolase 1 family.

It catalyses the reaction Hydrolysis of terminal, non-reducing beta-D-glucosyl residues with release of beta-D-glucose.. This is Beta-glucosidase 8 from Arabidopsis thaliana (Mouse-ear cress).